The chain runs to 568 residues: Multidrug and toxin extrusion protein 1 (568 aa).

The residue at position 1 (Met-1) is an N-acetylmethionine. Residues 1–36 (MEAPVELGPGGRQASPERRHWLRCLVLSDFREELRA) are Cytoplasmic-facing. Residues 37–57 (LLVLACPAFLAQLMVFLISFV) traverse the membrane as a helical segment. The Extracellular portion of the chain corresponds to 58-71 (SSVFCGHLSKLELN). A helical membrane pass occupies residues 72-92 (AVTLAIAVINVMGVSVGFGLS). The Cytoplasmic segment spans residues 93–119 (SACDTLISQTYGSRNLKHVGVILQRGS). The helical transmembrane segment at 120–140 (LILLLCCLPCWALFLNTQHIL) threads the bilayer. At 141-151 (LLFRQDPAVSR) the chain is on the extracellular side. A helical transmembrane segment spans residues 152–172 (LTQTYVTIFIPALPATFLYTL). Residues 173-175 (QVK) are Cytoplasmic-facing. The helical transmembrane segment at 176-196 (YLLNQGIVLPQVVTGVAANLV) threads the bilayer. The Extracellular portion of the chain corresponds to 197–214 (NALANYLFVYQLHLGVMG). A helical transmembrane segment spans residues 215-235 (SALANTVAQFTLALLLFLYIL). Topologically, residues 236 to 255 (RSKVYQATWGGWSLECLQDW) are cytoplasmic. Residues 256-278 (ASFFRLAIPSMLMLCMEWWAYEI) form a helical membrane-spanning segment. Residues 279–294 (GSFLSGILGMVELGAQ) lie on the Extracellular side of the membrane. The chain crosses the membrane as a helical span at residues 295-315 (SVTYELAVIVYMIPMGLSVAV). Over 316–335 (NVRVGNALGAGNIEQAKKSS) the chain is Cytoplasmic. A helical transmembrane segment spans residues 336 to 356 (AVALLVTELIAVVFCVMLLSC). The Extracellular segment spans residues 357 to 369 (KDLVGYIFTSDRD). A helical transmembrane segment spans residues 370-390 (IIALVAQVTPIYAVSHLFESL). Topologically, residues 391–407 (AGTSGGILRGSGNQKFG) are cytoplasmic. A helical membrane pass occupies residues 408–430 (AIVNAIGYYVVGLPIGIALMFAA). Over 431–433 (KLG) the chain is Extracellular. The helical transmembrane segment at 434–456 (VIGLWLGIVVCAVSQAVCFLGFI) threads the bilayer. Over 457-544 (ARLNWTKACQ…LSGKQLALRR (88 aa)) the chain is Cytoplasmic. Residues 545–565 (GLLLLGVILVLLAGILVKVYV) traverse the membrane as a helical segment. Topologically, residues 566–568 (RTQ) are extracellular.

This sequence belongs to the multi antimicrobial extrusion (MATE) (TC 2.A.66.1) family. In terms of tissue distribution, predominantly expressed in kidney and liver.

It localises to the cell membrane. It is found in the apical cell membrane. It carries out the reaction thiamine(out) + H(+)(in) = thiamine(in) + H(+)(out). The catalysed reaction is estrone 3-sulfate(in) + H(+)(out) = estrone 3-sulfate(out) + H(+)(in). The enzyme catalyses creatinine(in) + H(+)(out) = creatinine(out) + H(+)(in). It catalyses the reaction agmatine(in) + H(+)(out) = agmatine(out) + H(+)(in). Its function is as follows. Multidrug efflux pump that functions as a H(+)/organic cation antiporter. Plays a physiological role in the excretion of cationic compounds including endogenous metabolites, drugs, toxins through the kidney and liver, into urine and bile respectively. Mediates the efflux of endogenous compounds such as creatinine, vitamin B1/thiamine, agmatine and estrone-3-sulfate. May also contribute to regulate the transport of cationic compounds in testis across the blood-testis-barrier. This is Multidrug and toxin extrusion protein 1 (SLC47A1) from Oryctolagus cuniculus (Rabbit).